A 661-amino-acid chain; its full sequence is UvrABC system protein B (661 aa).

The Helicase ATP-binding domain maps to 25–182; that stretch reads AGLNSKKRSQ…NDLINLQYKR (158 aa). 38–45 is an ATP binding site; that stretch reads GITGSGKT. Positions 91–114 match the Beta-hairpin motif; sequence YYDYYQPEAYIARTDTFIEKDSSI. Residues 430 to 592 enclose the Helicase C-terminal domain; sequence QVEDLISEIQ…IIPKTINRAI (163 aa). Residues 621–656 enclose the UVR domain; that stretch reads KANINKLNKEMLKAASNLEFEQAAKLRDQLKTLEAA.

Belongs to the UvrB family. Forms a heterotetramer with UvrA during the search for lesions. Interacts with UvrC in an incision complex.

Its subcellular location is the cytoplasm. In terms of biological role, the UvrABC repair system catalyzes the recognition and processing of DNA lesions. A damage recognition complex composed of 2 UvrA and 2 UvrB subunits scans DNA for abnormalities. Upon binding of the UvrA(2)B(2) complex to a putative damaged site, the DNA wraps around one UvrB monomer. DNA wrap is dependent on ATP binding by UvrB and probably causes local melting of the DNA helix, facilitating insertion of UvrB beta-hairpin between the DNA strands. Then UvrB probes one DNA strand for the presence of a lesion. If a lesion is found the UvrA subunits dissociate and the UvrB-DNA preincision complex is formed. This complex is subsequently bound by UvrC and the second UvrB is released. If no lesion is found, the DNA wraps around the other UvrB subunit that will check the other stand for damage. In Rickettsia akari (strain Hartford), this protein is UvrABC system protein B.